A 276-amino-acid polypeptide reads, in one-letter code: MKLCDFEVGLDQPLFLIAGPCVIESMQLQLDVAGRLKEITGKLGVNFIFKSSFDKANRTSGTSFRGPGLEEGLKVLDAVKKQIGVPVLTDVHEYTPMNEVAAVVDVLQTPAFLVRQTDFIKNVCAAGKPVNIKKGQFLAPWDMKPVVDKAKSTGNEQIMVCERGASFGYNNLVSDMRSLSVMRDTGCPVVFDATHSVQLPGGQGSSSGGQREFVPVLARAAVAVGISGLFAETHPDPSKALSDGPNAWPLDRMEELLETLMELDAVTKKHGFARFA.

It belongs to the KdsA family.

It localises to the cytoplasm. The enzyme catalyses D-arabinose 5-phosphate + phosphoenolpyruvate + H2O = 3-deoxy-alpha-D-manno-2-octulosonate-8-phosphate + phosphate. It functions in the pathway carbohydrate biosynthesis; 3-deoxy-D-manno-octulosonate biosynthesis; 3-deoxy-D-manno-octulosonate from D-ribulose 5-phosphate: step 2/3. The protein operates within bacterial outer membrane biogenesis; lipopolysaccharide biosynthesis. In Xanthomonas euvesicatoria pv. vesicatoria (strain 85-10) (Xanthomonas campestris pv. vesicatoria), this protein is 2-dehydro-3-deoxyphosphooctonate aldolase.